Reading from the N-terminus, the 671-residue chain is Annexin A6 (671 aa).

8 Annexin repeats span residues 18 to 89 (FNAS…SLMR), 90 to 161 (PPAY…VLLQ), 173 to 245 (DLVE…AVVK), 249 to 320 (STAE…KLCE), 361 to 432 (FNDD…GLML), 433 to 504 (TPAQ…SLAL), 519 to 594 (EDAK…AIVR), and 598 to 669 (NKPA…LCGG).

Belongs to the annexin family.

Its subcellular location is the cytoplasm. It is found in the melanosome. In terms of biological role, may associate with CD21. May regulate the release of Ca(2+) from intracellular stores. In Gallus gallus (Chicken), this protein is Annexin A6 (ANXA6).